We begin with the raw amino-acid sequence, 445 residues long: Phosphoglucosamine mutase (445 aa).

Serine 102 functions as the Phosphoserine intermediate in the catalytic mechanism. Residues serine 102, aspartate 241, aspartate 243, and aspartate 245 each contribute to the Mg(2+) site. Serine 102 is subject to Phosphoserine.

It belongs to the phosphohexose mutase family. Mg(2+) serves as cofactor. Activated by phosphorylation.

It carries out the reaction alpha-D-glucosamine 1-phosphate = D-glucosamine 6-phosphate. In terms of biological role, catalyzes the conversion of glucosamine-6-phosphate to glucosamine-1-phosphate. The sequence is that of Phosphoglucosamine mutase from Escherichia coli O81 (strain ED1a).